A 209-amino-acid polypeptide reads, in one-letter code: Uracil phosphoribosyltransferase (209 aa).

5-phospho-alpha-D-ribose 1-diphosphate is bound by residues arginine 79, arginine 104, and 131–139 (DPMLATGGS). Residues isoleucine 194 and 199–201 (GDA) each bind uracil. Aspartate 200 serves as a coordination point for 5-phospho-alpha-D-ribose 1-diphosphate.

It belongs to the UPRTase family. Mg(2+) serves as cofactor.

The enzyme catalyses UMP + diphosphate = 5-phospho-alpha-D-ribose 1-diphosphate + uracil. It functions in the pathway pyrimidine metabolism; UMP biosynthesis via salvage pathway; UMP from uracil: step 1/1. Allosterically activated by GTP. Functionally, catalyzes the conversion of uracil and 5-phospho-alpha-D-ribose 1-diphosphate (PRPP) to UMP and diphosphate. This Bacillus licheniformis (strain ATCC 14580 / DSM 13 / JCM 2505 / CCUG 7422 / NBRC 12200 / NCIMB 9375 / NCTC 10341 / NRRL NRS-1264 / Gibson 46) protein is Uracil phosphoribosyltransferase.